The primary structure comprises 345 residues: 4-hydroxyproline 2-epimerase 1 (345 aa).

A substrate-binding site is contributed by Gln85. Ser93 acts as the Proton acceptor in catalysis. Substrate contacts are provided by residues 94–95 and Asp251; that span reads GS. Cys255 functions as the Proton donor in the catalytic mechanism. 256-257 lines the substrate pocket; that stretch reads GT.

It belongs to the proline racemase family.

The catalysed reaction is trans-4-hydroxy-L-proline = cis-4-hydroxy-D-proline. Its function is as follows. Catalyzes the epimerization of trans-4-hydroxy-L-proline (t4LHyp) to cis-4-hydroxy-D-proline (c4DHyp). May be involved in a degradation pathway of t4LHyp. Can also catalyze the epimerization of trans-3-hydroxy-L-proline (t3LHyp) to cis-3-hydroxy-D-proline (c3DHyp) in vitro. Displays no proline racemase activity. The protein is 4-hydroxyproline 2-epimerase 1 of Rhizobium rhizogenes (strain K84 / ATCC BAA-868) (Agrobacterium radiobacter).